Here is a 113-residue protein sequence, read N- to C-terminus: Large ribosomal subunit protein bL20c (113 aa).

It belongs to the bacterial ribosomal protein bL20 family.

It is found in the plastid. The protein resides in the chloroplast. Its function is as follows. Binds directly to 23S ribosomal RNA and is necessary for the in vitro assembly process of the 50S ribosomal subunit. It is not involved in the protein synthesizing functions of that subunit. This Staurastrum punctulatum (Green alga) protein is Large ribosomal subunit protein bL20c.